A 214-amino-acid polypeptide reads, in one-letter code: Ribonuclease HII (214 aa).

Residues 26-214 (EIVCGVDEAG…PVREAFDLIR (189 aa)) enclose the RNase H type-2 domain. A divalent metal cation contacts are provided by Asp32, Glu33, and Asp124.

It belongs to the RNase HII family. The cofactor is Mn(2+). Mg(2+) is required as a cofactor.

The protein resides in the cytoplasm. It catalyses the reaction Endonucleolytic cleavage to 5'-phosphomonoester.. Its function is as follows. Endonuclease that specifically degrades the RNA of RNA-DNA hybrids. This Burkholderia mallei (strain NCTC 10247) protein is Ribonuclease HII.